Reading from the N-terminus, the 505-residue chain is Histidine--tRNA ligase (505 aa).

The protein belongs to the class-II aminoacyl-tRNA synthetase family. Homodimer.

Its subcellular location is the cytoplasm. The enzyme catalyses tRNA(His) + L-histidine + ATP = L-histidyl-tRNA(His) + AMP + diphosphate + H(+). The chain is Histidine--tRNA ligase from Jannaschia sp. (strain CCS1).